A 319-amino-acid chain; its full sequence is ATP-dependent 6-phosphofructokinase 1 (319 aa).

Position 11 (G11) interacts with ATP. 21-25 (RAVTR) lines the ADP pocket. Residues 72 to 73 (RC) and 102 to 105 (GDGS) each bind ATP. D103 is a Mg(2+) binding site. 125-127 (TID) contacts substrate. D127 functions as the Proton acceptor in the catalytic mechanism. R154 lines the ADP pocket. Substrate is bound by residues R162 and 169–171 (MGR). Residues 185-187 (GAE) and 213-215 (KTH) contribute to the ADP site. Substrate contacts are provided by residues E222, R243, and 249–252 (HIQR).

This sequence belongs to the phosphofructokinase type A (PFKA) family. ATP-dependent PFK group I subfamily. Prokaryotic clade 'B1' sub-subfamily. In terms of assembly, homotetramer. Requires Mg(2+) as cofactor.

The protein localises to the cytoplasm. It carries out the reaction beta-D-fructose 6-phosphate + ATP = beta-D-fructose 1,6-bisphosphate + ADP + H(+). It participates in carbohydrate degradation; glycolysis; D-glyceraldehyde 3-phosphate and glycerone phosphate from D-glucose: step 3/4. Allosterically activated by ADP and other diphosphonucleosides, and allosterically inhibited by phosphoenolpyruvate. Functionally, catalyzes the phosphorylation of D-fructose 6-phosphate to fructose 1,6-bisphosphate by ATP, the first committing step of glycolysis. This Clostridium perfringens (strain 13 / Type A) protein is ATP-dependent 6-phosphofructokinase 1.